The sequence spans 390 residues: Mannitol-1-phosphate 5-dehydrogenase (390 aa).

Alanine 3 to glycine 14 provides a ligand contact to NAD(+).

Belongs to the mannitol dehydrogenase family.

The catalysed reaction is D-mannitol 1-phosphate + NAD(+) = beta-D-fructose 6-phosphate + NADH + H(+). The protein is Mannitol-1-phosphate 5-dehydrogenase of Buchnera aphidicola subsp. Baizongia pistaciae (strain Bp).